We begin with the raw amino-acid sequence, 425 residues long: Pleckstrin homology domain-containing family A member 2 (425 aa).

The 107-residue stretch at 7 to 113 (QNRICGFLDI…WVEALNQASK (107 aa)) folds into the PH 1 domain. Lys141 participates in a covalent cross-link: Glycyl lysine isopeptide (Lys-Gly) (interchain with G-Cter in SUMO2). Ser184 carries the phosphoserine modification. Positions 198 to 298 (PLIKSGYCVK…WIKEIGAAVQ (101 aa)) constitute a PH 2 domain. Ser314 and Ser349 each carry phosphoserine. Positions 374–410 (AEDSLFTPRLGESSTSAVLPSSRIRHRSEPQHPKEKP) are disordered. Positions 400–410 (RSEPQHPKEKP) are enriched in basic and acidic residues.

Binds MPDZ and PTPN13.

The protein localises to the cytoplasm. It is found in the cell membrane. Its subcellular location is the nucleus. Binds specifically to phosphatidylinositol 3,4-diphosphate (PtdIns3,4P2), but not to other phosphoinositides. May recruit other proteins to the plasma membrane. The polypeptide is Pleckstrin homology domain-containing family A member 2 (PLEKHA2) (Bos taurus (Bovine)).